We begin with the raw amino-acid sequence, 1678 residues long: Anaphase-promoting complex subunit 1 (1678 aa).

PC repeat units follow at residues 1089–1116 (SAGF…VNRL), 1156–1194 (GAII…PDFI), 1256–1293 (GACI…PLSA), and 1320–1354 (IISL…HANY).

The protein belongs to the APC1 family. As to quaternary structure, the APC/C is composed of at least 10 subunits.

Its subcellular location is the nucleus. The protein operates within protein modification; protein ubiquitination. In terms of biological role, component of the anaphase promoting complex/cyclosome (APC/C), a cell cycle-regulated E3 ubiquitin-protein ligase complex that controls progression through mitosis and the G1 phase of the cell cycle. The APC/C complex controls several key steps in the cell cycle by mediating ubiquitination and subsequent degradation of target proteins such as cyclins. The APC/C complex is required for the female gametophyte development and is involved in several aspect of development by controlling cell division and cell elongation. Involved in the control of endoreduplication. The polypeptide is Anaphase-promoting complex subunit 1 (APC1) (Arabidopsis thaliana (Mouse-ear cress)).